A 134-amino-acid polypeptide reads, in one-letter code: Orexigenic neuropeptide QRFP (134 aa).

The first 18 residues, 1-18 (MRSPYSLPYLLFLPLGAC), serve as a signal peptide directing secretion. Positions 19–88 (FPVLDTEEPV…RAGFQLRLGR (70 aa)) are excised as a propeptide. Phe-131 bears the Phenylalanine amide mark.

The protein belongs to the RFamide neuropeptide family. In terms of assembly, ligand for the G-protein coupled receptor QRFPR/GPR103. As to expression, expressed in the hypothalamus.

It localises to the secreted. Functionally, stimulates feeding behavior, metabolic rate and locomotor activity and increases blood pressure. May have orexigenic activity. May promote aldosterone secretion by the adrenal gland. This is Orexigenic neuropeptide QRFP from Bos taurus (Bovine).